Consider the following 272-residue polypeptide: uncharacterized protein (272 aa).

Residues 1 to 27 form the HTH merR-type domain; sequence MDTLAFINRALVEEGYSLKDIKLVLIT.

This is an uncharacterized protein from Aquifex aeolicus (strain VF5).